A 73-amino-acid polypeptide reads, in one-letter code: MRIKVKVKPGTSKNEVKKIDENLYEVRTTTIPEKGKANEKVVELLSDFFDVPKSKIKIVKGQTSREKEVEVGE.

This sequence belongs to the UPF0235 family.

The polypeptide is UPF0235 protein SYO3AOP1_0257 (Sulfurihydrogenibium sp. (strain YO3AOP1)).